The chain runs to 216 residues: MKMILLGPPGSGKGTQAKMLSERLGIPQISTGDMLRAAVKEGTPMGVKAKAKMDAGALVPDEVVVGIVRERLVKDDCDKGFILDGFPRTLPQADALKQTLGDLKKDLDAVISLEVDNDAVVGRVAGRRTCRDCGKMYHVEFDAPAVADKCDKCGGQLFQRDDDKEETIRKRLDVYAQQTAPLIAYYRADGLLRDIDGMKDISGVQQQILSALGCGL.

10–15 (GSGKGT) contributes to the ATP binding site. An NMP region spans residues 30 to 59 (STGDMLRAAVKEGTPMGVKAKAKMDAGALV). Residues Thr31, Arg36, 57–59 (ALV), 85–88 (GFPR), and Gln92 each bind AMP. An LID region spans residues 126–163 (GRRTCRDCGKMYHVEFDAPAVADKCDKCGGQLFQRDDD). Arg127 is a binding site for ATP. Zn(2+)-binding residues include Cys130, Cys133, Cys150, and Cys153. Residues Arg160 and Arg171 each contribute to the AMP site. ATP is bound at residue Lys199.

This sequence belongs to the adenylate kinase family. In terms of assembly, monomer.

Its subcellular location is the cytoplasm. It carries out the reaction AMP + ATP = 2 ADP. The protein operates within purine metabolism; AMP biosynthesis via salvage pathway; AMP from ADP: step 1/1. Functionally, catalyzes the reversible transfer of the terminal phosphate group between ATP and AMP. Plays an important role in cellular energy homeostasis and in adenine nucleotide metabolism. In Syntrophotalea carbinolica (strain DSM 2380 / NBRC 103641 / GraBd1) (Pelobacter carbinolicus), this protein is Adenylate kinase.